Here is an 857-residue protein sequence, read N- to C-terminus: Thiamine repressible genes regulatory protein thi5 (857 aa).

The segment at residues 38 to 64 (CLSCRAKKIRCSGSEPCQACIATPSQC) is a DNA-binding region (zn(2)-C6 fungal-type). Disordered regions lie at residues 152 to 175 (AVKS…NFSS) and 797 to 819 (GHAL…HPSQ). The segment covering 159 to 175 (SFPSSSTPPSSDSNFSS) has biased composition (low complexity). The segment covering 803–819 (PESNNSSNSFKPSHPSQ) has biased composition (polar residues).

Its subcellular location is the nucleus. Functionally, transcription factor that activates the nmt1 promoter. Regulation of thiamine repressible genes. Negatively regulates conjugation during meiosis, by inducing negative regulators which delay conjugation. Involved in thi1 regulation. This chain is Thiamine repressible genes regulatory protein thi5 (thi5), found in Schizosaccharomyces pombe (strain 972 / ATCC 24843) (Fission yeast).